The sequence spans 258 residues: Glucanase inhibitor protein 3 (258 aa).

A signal peptide spans 1 to 19 (MKIISAVAASSIALGAVSA). The Peptidase S1 domain occupies 29–256 (VLGGAVVPSG…ALEWINSITK (228 aa)). A disulfide bridge connects residues C56 and C72. 3 N-linked (GlcNAc...) asparagine glycosylation sites follow: N90, N105, and N110. 2 cysteine pairs are disulfide-bonded: C180/C192 and C202/C233.

This sequence belongs to the peptidase S1 family. As to quaternary structure, forms an apoplastic complex with host endoglucanases in tomato leaves during P.infestans infection.

It localises to the secreted. In terms of biological role, secreted effector that suppresses host plant glucan elicitor-mediated defense responses. Targets host endoglucanases and inhibits the endoglucanase-mediated release of elicitor-active glucan oligosaccharides from P.infestans cell walls. The chain is Glucanase inhibitor protein 3 from Phytophthora infestans (Potato late blight agent).